The chain runs to 376 residues: Queuine tRNA-ribosyltransferase (376 aa).

Residue Asp-89 is the Proton acceptor of the active site. Substrate contacts are provided by residues 89–93, Asp-143, Gln-194, and Gly-221; that span reads DSGGF. The tract at residues 252–258 is RNA binding; sequence GVGIPSN. The Nucleophile role is filled by Asp-271. Residues 276 to 280 are RNA binding; important for wobble base 34 recognition; sequence ARNGR. Positions 309, 311, 314, and 340 each coordinate Zn(2+).

It belongs to the queuine tRNA-ribosyltransferase family. Homodimer. Within each dimer, one monomer is responsible for RNA recognition and catalysis, while the other monomer binds to the replacement base PreQ1. Zn(2+) serves as cofactor.

It catalyses the reaction 7-aminomethyl-7-carbaguanine + guanosine(34) in tRNA = 7-aminomethyl-7-carbaguanosine(34) in tRNA + guanine. It participates in tRNA modification; tRNA-queuosine biosynthesis. In terms of biological role, catalyzes the base-exchange of a guanine (G) residue with the queuine precursor 7-aminomethyl-7-deazaguanine (PreQ1) at position 34 (anticodon wobble position) in tRNAs with GU(N) anticodons (tRNA-Asp, -Asn, -His and -Tyr). Catalysis occurs through a double-displacement mechanism. The nucleophile active site attacks the C1' of nucleotide 34 to detach the guanine base from the RNA, forming a covalent enzyme-RNA intermediate. The proton acceptor active site deprotonates the incoming PreQ1, allowing a nucleophilic attack on the C1' of the ribose to form the product. After dissociation, two additional enzymatic reactions on the tRNA convert PreQ1 to queuine (Q), resulting in the hypermodified nucleoside queuosine (7-(((4,5-cis-dihydroxy-2-cyclopenten-1-yl)amino)methyl)-7-deazaguanosine). The sequence is that of Queuine tRNA-ribosyltransferase from Clostridium botulinum (strain Okra / Type B1).